A 307-amino-acid chain; its full sequence is GTPase Era (307 aa).

One can recognise an Era-type G domain in the interval 13 to 180; sequence RCGFVALIGA…RRALAEMVPP (168 aa). The segment at 21 to 28 is G1; sequence GAPNVGKS. 21-28 contributes to the GTP binding site; that stretch reads GAPNVGKS. The tract at residues 47–51 is G2; that stretch reads QTTRA. Residues 68 to 71 are G3; sequence DTPG. GTP-binding positions include 68 to 72 and 130 to 133; these read DTPGI and NKVD. The tract at residues 130–133 is G4; that stretch reads NKVD. Positions 159-161 are G5; sequence ISA. A KH type-2 domain is found at 211-288; sequence LHQELPYQST…HLFLFVKVRE (78 aa).

It belongs to the TRAFAC class TrmE-Era-EngA-EngB-Septin-like GTPase superfamily. Era GTPase family. As to quaternary structure, monomer.

It localises to the cytoplasm. Its subcellular location is the cell inner membrane. In terms of biological role, an essential GTPase that binds both GDP and GTP, with rapid nucleotide exchange. Plays a role in 16S rRNA processing and 30S ribosomal subunit biogenesis and possibly also in cell cycle regulation and energy metabolism. The sequence is that of GTPase Era from Bradyrhizobium sp. (strain ORS 278).